Reading from the N-terminus, the 117-residue chain is Galanin-like peptide (117 aa).

The signal sequence occupies residues 1–23 (MACSVHLVLFLTILLSLAETPES). Positions 86–117 (TMGETFVKANTGDMHILDKNVPKEEATLDSES) are excised as a propeptide.

It belongs to the galanin family. In terms of tissue distribution, isoform 2 is found in brain, thymus and skin. Isoform 2 is found in the skin, in pericytes covering microvascular arterioles and venules on their abluminal surfaces. In larger vessels, isoform 2 is expressed in layers of smooth muscle cells. Isoform 2 is not detected in endothelial cells.

It is found in the secreted. In terms of biological role, hypothalamic neuropeptide which binds to the G-protein-coupled galanin receptors (GALR1, GALR2 and GALR3). Involved in a large number of putative physiological functions in CNS homeostatic processes, including the regulation of gonadotropin-releasing hormone secretion. Functionally, exhibits antimicrobial activity against Gram-negative bacterias, inducing bacterial membrane blebbing. Exhibits potent and dose-dependent vasoconstrictor and anti-edema activity in the cutaneous microvasculature, a physiologic effects which does not appear to be mediated via GALR1 or GALR2. The protein is Galanin-like peptide (Galp) of Mus musculus (Mouse).